A 271-amino-acid chain; its full sequence is MSRIQQTFAALAEQGRKGLIPFITAGDPDPAKTVEFMHALAAGGADVIELGVPFSDPMADGPVIQRSSERALARGVTLKSVLADVKRFRETDPKTPVVLMGYANPIERMGVDAFAAEAHAAGVDGVLVVDYPPEEAGVFAEKMRAAQIDPIFLLAPTSTDERIADVGKIASGYVYYVSLKGVTGAGNLDVSSIAGKIPAIKSRVPVPVGVGFGIRDAETARAVAEVSDAVVIGSRLVQLLESAAPEGAAAALKTFIAELRAALDGAGKTAR.

Catalysis depends on proton acceptor residues E49 and D60.

This sequence belongs to the TrpA family. As to quaternary structure, tetramer of two alpha and two beta chains.

It carries out the reaction (1S,2R)-1-C-(indol-3-yl)glycerol 3-phosphate + L-serine = D-glyceraldehyde 3-phosphate + L-tryptophan + H2O. Its pathway is amino-acid biosynthesis; L-tryptophan biosynthesis; L-tryptophan from chorismate: step 5/5. In terms of biological role, the alpha subunit is responsible for the aldol cleavage of indoleglycerol phosphate to indole and glyceraldehyde 3-phosphate. The protein is Tryptophan synthase alpha chain of Burkholderia cenocepacia (strain ATCC BAA-245 / DSM 16553 / LMG 16656 / NCTC 13227 / J2315 / CF5610) (Burkholderia cepacia (strain J2315)).